A 127-amino-acid chain; its full sequence is DNA-directed RNA polymerase subunit omega (127 aa).

This sequence belongs to the RNA polymerase subunit omega family. The RNAP catalytic core consists of 2 alpha, 1 beta, 1 beta' and 1 omega subunit. When a sigma factor is associated with the core the holoenzyme is formed, which can initiate transcription.

The enzyme catalyses RNA(n) + a ribonucleoside 5'-triphosphate = RNA(n+1) + diphosphate. In terms of biological role, promotes RNA polymerase assembly. Latches the N- and C-terminal regions of the beta' subunit thereby facilitating its interaction with the beta and alpha subunits. In Rickettsia peacockii (strain Rustic), this protein is DNA-directed RNA polymerase subunit omega.